The chain runs to 245 residues: MNRILLEVCVDDPDGLEAAVAGGADRVELCSALCAGGLTPSPGLMSAAGMPPVPVYAMIRPRAGDFVYDAADLEVMRRDIDAARAAGLAGVVLGASRADGRLDARMLTKLAGHAAGMGLTLHRAFDLVPDFAEALEIAVELGFERILTSGGAKTAPEAVEILEKLIAAASGRISIMPGSGITSNTAGTLLPRLAIAEVHSSCSTSEPANDMRLVEMGFAAPERRRTDAAKIRAMRACLDALAAKA.

This sequence belongs to the CutC family.

Its subcellular location is the cytoplasm. In Sinorhizobium medicae (strain WSM419) (Ensifer medicae), this protein is PF03932 family protein CutC.